We begin with the raw amino-acid sequence, 297 residues long: Phosphatidylglycerol--prolipoprotein diacylglyceryl transferase (297 aa).

Helical transmembrane passes span 17–37, 59–79, and 97–117; these read LAVR…IVVG, MLFY…VLFY, and GGMS…LFAW. Residue Arg142 participates in a 1,2-diacyl-sn-glycero-3-phospho-(1'-sn-glycerol) binding. The next 2 membrane-spanning stretches (helical) occupy residues 230-250 and 257-277; these read MGAV…TVEF and FLGL…PMIV.

It belongs to the Lgt family.

The protein resides in the cell inner membrane. The enzyme catalyses L-cysteinyl-[prolipoprotein] + a 1,2-diacyl-sn-glycero-3-phospho-(1'-sn-glycerol) = an S-1,2-diacyl-sn-glyceryl-L-cysteinyl-[prolipoprotein] + sn-glycerol 1-phosphate + H(+). Its pathway is protein modification; lipoprotein biosynthesis (diacylglyceryl transfer). In terms of biological role, catalyzes the transfer of the diacylglyceryl group from phosphatidylglycerol to the sulfhydryl group of the N-terminal cysteine of a prolipoprotein, the first step in the formation of mature lipoproteins. This chain is Phosphatidylglycerol--prolipoprotein diacylglyceryl transferase, found in Burkholderia multivorans (strain ATCC 17616 / 249).